The chain runs to 485 residues: Velvet complex subunit B (485 aa).

One can recognise a Velvet domain in the interval 33–459 (GRKHYSLEVV…GNQGQKLPLA (427 aa)). A disordered region spans residues 107–353 (VLHPSSVDRH…PPPPRHTYTR (247 aa)). Polar residues-rich tracts occupy residues 134 to 155 (APQS…TLSQ), 234 to 243 (RSPSSSTSDH), 267 to 304 (SISS…SPHS), and 326 to 341 (THSQ…QHVS).

Belongs to the velvet family. VelB subfamily. As to quaternary structure, component of the heterotrimeric velvet complex composed of laeA, veA and velB; VeA acting as a bridging protein between laeA and velB. Forms a heterodimeric complex with vosA; the formation of the velB-vosA complex is light-dependent.

The protein localises to the nucleus. Its subcellular location is the cytoplasm. Functionally, component of the velvet transcription factor complex that controls sexual/asexual developmental ratio in response to light, promoting sexual development in the darkness while stimulating asexual sporulation under illumination. The velvet complex acts as a global regulator for secondary metabolite gene expression. Component of the velB-VosA heterodimeric complex that plays a dual role in activating genes associated with spore maturation and repressing certain development-associated genes. The velB-VosA complex binds DNA through the DNA-binding domain of vosA that recognizes an 11-nucleotide consensus sequence 5'-CTGGCCGCGGC-3' consisting of two motifs in the promoters of key developmental regulatory genes. The protein is Velvet complex subunit B of Laccaria bicolor (strain S238N-H82 / ATCC MYA-4686) (Bicoloured deceiver).